A 149-amino-acid chain; its full sequence is uncharacterized protein (149 aa).

2 disordered regions span residues 24 to 74 and 129 to 149; these read TSQG…NDLE and AIQD…PRAP. Residues 28–42 are compositionally biased toward basic and acidic residues; the sequence is EDVKPEPKPEVDEKV. The stretch at 102-131 forms a coiled coil; sequence SELESLKEKVSSATSMEELREIMEEFRAIQ.

This is an uncharacterized protein from Archaeoglobus fulgidus (strain ATCC 49558 / DSM 4304 / JCM 9628 / NBRC 100126 / VC-16).